Here is a 718-residue protein sequence, read N- to C-terminus: Polyribonucleotide nucleotidyltransferase (718 aa).

Residues Asp-493 and Asp-499 each coordinate Mg(2+). Residues 560-619 (PRVIKKQIDPDKIRNVIGPGGKMINKIIDETGVKIDIEPDGLIYISSSDAEQAEQAIKAI) enclose the KH domain. The 69-residue stretch at 629–697 (GEVYLGKVVR…ERGRINLSRK (69 aa)) folds into the S1 motif domain. The disordered stretch occupies residues 695–718 (SRKQALGEEDGKTNNDDKKSTKKT). Residues 699 to 718 (ALGEEDGKTNNDDKKSTKKT) show a composition bias toward basic and acidic residues.

Belongs to the polyribonucleotide nucleotidyltransferase family. It depends on Mg(2+) as a cofactor.

It is found in the cytoplasm. The catalysed reaction is RNA(n+1) + phosphate = RNA(n) + a ribonucleoside 5'-diphosphate. Its function is as follows. Involved in mRNA degradation. Catalyzes the phosphorolysis of single-stranded polyribonucleotides processively in the 3'- to 5'-direction. This is Polyribonucleotide nucleotidyltransferase from Natranaerobius thermophilus (strain ATCC BAA-1301 / DSM 18059 / JW/NM-WN-LF).